Here is a 652-residue protein sequence, read N- to C-terminus: Acetyl-coenzyme A synthetase (652 aa).

CoA is bound by residues 193–196 and Thr-312; that span reads RRGK. ATP contacts are provided by residues 388–390, 412–417, Asp-501, and Arg-516; these read GEP and DTWWQT. CoA is bound at residue Ser-524. Positions 538, 540, and 543 each coordinate Mg(2+). Lys-611 bears the N6-acetyllysine mark.

It belongs to the ATP-dependent AMP-binding enzyme family. Mg(2+) is required as a cofactor. In terms of processing, acetylated. Deacetylation by the SIR2-homolog deacetylase activates the enzyme.

The catalysed reaction is acetate + ATP + CoA = acetyl-CoA + AMP + diphosphate. In terms of biological role, catalyzes the conversion of acetate into acetyl-CoA (AcCoA), an essential intermediate at the junction of anabolic and catabolic pathways. AcsA undergoes a two-step reaction. In the first half reaction, AcsA combines acetate with ATP to form acetyl-adenylate (AcAMP) intermediate. In the second half reaction, it can then transfer the acetyl group from AcAMP to the sulfhydryl group of CoA, forming the product AcCoA. The polypeptide is Acetyl-coenzyme A synthetase (Streptomyces avermitilis (strain ATCC 31267 / DSM 46492 / JCM 5070 / NBRC 14893 / NCIMB 12804 / NRRL 8165 / MA-4680)).